The sequence spans 105 residues: MQSQKIRIRLKAFDHKLLDQSTKEIVETARRTGAKVAGPIPLPTRINRYTVLRSPHVDKKSREQFEVRTHKRMLDILEPTQQTVDQLMKLDLSAGVDVEIKLSAV.

This sequence belongs to the universal ribosomal protein uS10 family. Part of the 30S ribosomal subunit.

In terms of biological role, involved in the binding of tRNA to the ribosomes. This Bdellovibrio bacteriovorus (strain ATCC 15356 / DSM 50701 / NCIMB 9529 / HD100) protein is Small ribosomal subunit protein uS10.